Consider the following 389-residue polypeptide: Type II methyltransferase M2.BsuMI (389 aa).

The SAM-dependent MTase C5-type domain maps to 1–299; the sequence is MKVVSLFSGI…ENLSQPKGSI (299 aa). The active site involves C69.

It belongs to the class I-like SAM-binding methyltransferase superfamily. C5-methyltransferase family. As to quaternary structure, monomer. May form a complex with YdiP, also seems to be active alone.

It carries out the reaction a 2'-deoxycytidine in DNA + S-adenosyl-L-methionine = a 5-methyl-2'-deoxycytidine in DNA + S-adenosyl-L-homocysteine + H(+). Somewhat inhibited by MgCl(2) and spermidine, strongly inhibited by MnCl(2). A methylase, recognizes the double-stranded sequence 5'-YTCGAR-3', methylates C-3 on both strands, and protects the DNA from cleavage by the BsuMI endonuclease. The polypeptide is Type II methyltransferase M2.BsuMI (ydiP) (Bacillus subtilis (strain 168)).